Reading from the N-terminus, the 223-residue chain is Ribose-5-phosphate isomerase A (223 aa).

Residues 32-35, 83-86, and 96-99 each bind substrate; these read TGST, DGAD, and KGGG. The Proton acceptor role is filled by glutamate 105. Lysine 123 is a substrate binding site.

It belongs to the ribose 5-phosphate isomerase family. As to quaternary structure, homodimer.

The enzyme catalyses aldehydo-D-ribose 5-phosphate = D-ribulose 5-phosphate. It functions in the pathway carbohydrate degradation; pentose phosphate pathway; D-ribose 5-phosphate from D-ribulose 5-phosphate (non-oxidative stage): step 1/1. In terms of biological role, catalyzes the reversible conversion of ribose-5-phosphate to ribulose 5-phosphate. This chain is Ribose-5-phosphate isomerase A, found in Acinetobacter baumannii (strain AYE).